The following is a 262-amino-acid chain: Polyamine aminopropyltransferase (262 aa).

Positions 1–249 (MWITQEITPY…DIHRAAFALP (249 aa)) constitute a PABS domain. Asparagine 29 is a binding site for S-methyl-5'-thioadenosine. Residue aspartate 83 participates in spermidine binding. Catalysis depends on aspartate 155, which acts as the Proton acceptor.

This sequence belongs to the spermidine/spermine synthase family. Homodimer or homotetramer.

It is found in the cytoplasm. It carries out the reaction S-adenosyl 3-(methylsulfanyl)propylamine + putrescine = S-methyl-5'-thioadenosine + spermidine + H(+). The protein operates within amine and polyamine biosynthesis; spermidine biosynthesis; spermidine from putrescine: step 1/1. In terms of biological role, catalyzes the irreversible transfer of a propylamine group from the amino donor S-adenosylmethioninamine (decarboxy-AdoMet) to putrescine (1,4-diaminobutane) to yield spermidine. The sequence is that of Polyamine aminopropyltransferase from Helicobacter pylori (strain HPAG1).